Reading from the N-terminus, the 475-residue chain is Zinc-regulated GTPase metalloprotein activator 1 (475 aa).

A GTP-binding site is contributed by 50 to 57 (GFLGSGKT). Zn(2+)-binding residues include C116, C118, and C119. Residues 116–119 (CICC) carry the CXCC motif motif. Residues 119-123 (CTMRE) and 229-232 (NKCD) contribute to the GTP site. In terms of domain architecture, CobW C-terminal spans 302-420 (IKSFIYKARR…LIESELNNCL (119 aa)). Residues 440-467 (IQLDEELEEEELEEEEEEGEYKDEIEMK) are a coiled coil. A compositionally biased stretch (acidic residues) spans 445 to 460 (ELEEEELEEEEEEGEY). The interval 445 to 475 (ELEEEELEEEEEEGEYKDEIEMKVDGSKFKK) is disordered. A compositionally biased stretch (basic and acidic residues) spans 461–475 (KDEIEMKVDGSKFKK).

Belongs to the SIMIBI class G3E GTPase family. ZNG1 subfamily.

It carries out the reaction GTP + H2O = GDP + phosphate + H(+). Its function is as follows. Zinc chaperone that directly transfers zinc cofactor to target metalloproteins, thereby activating them. Zinc is transferred from the CXCC motif in the GTPase domain to the zinc binding site in target proteins in a process requiring GTP hydrolysis. In Dictyostelium discoideum (Social amoeba), this protein is Zinc-regulated GTPase metalloprotein activator 1.